Here is a 369-residue protein sequence, read N- to C-terminus: Methionine import ATP-binding protein MetN 1 (369 aa).

In terms of domain architecture, ABC transporter spans 29-265; that stretch reads IRLHGLGKRY…PRHAVTRSLL (237 aa). Position 62–69 (62–69) interacts with ATP; it reads GRSGAGKS.

It belongs to the ABC transporter superfamily. Methionine importer (TC 3.A.1.24) family. As to quaternary structure, the complex is composed of two ATP-binding proteins (MetN), two transmembrane proteins (MetI) and a solute-binding protein (MetQ).

Its subcellular location is the cell inner membrane. The catalysed reaction is L-methionine(out) + ATP + H2O = L-methionine(in) + ADP + phosphate + H(+). The enzyme catalyses D-methionine(out) + ATP + H2O = D-methionine(in) + ADP + phosphate + H(+). Functionally, part of the ABC transporter complex MetNIQ involved in methionine import. Responsible for energy coupling to the transport system. In Pseudomonas aeruginosa (strain ATCC 15692 / DSM 22644 / CIP 104116 / JCM 14847 / LMG 12228 / 1C / PRS 101 / PAO1), this protein is Methionine import ATP-binding protein MetN 1.